The sequence spans 207 residues: Large ribosomal subunit protein uL4 (207 aa).

A disordered region spans residues 49 to 78 (HAVKNRSAVRGGGRKPWRQKGTGRARQGSI). Over residues 60 to 71 (GGRKPWRQKGTG) the composition is skewed to basic residues.

It belongs to the universal ribosomal protein uL4 family. Part of the 50S ribosomal subunit.

In terms of biological role, one of the primary rRNA binding proteins, this protein initially binds near the 5'-end of the 23S rRNA. It is important during the early stages of 50S assembly. It makes multiple contacts with different domains of the 23S rRNA in the assembled 50S subunit and ribosome. Functionally, forms part of the polypeptide exit tunnel. This is Large ribosomal subunit protein uL4 from Latilactobacillus sakei subsp. sakei (strain 23K) (Lactobacillus sakei subsp. sakei).